The following is a 331-amino-acid chain: Meiotically up-regulated gene 172 protein (331 aa).

Positions 72–166 (IKNNEYEKQR…KGNYGLVKAR (95 aa)) form a coiled coil.

It belongs to the ADIP family.

Its subcellular location is the cytoplasm. In terms of biological role, has a role in meiosis. The sequence is that of Meiotically up-regulated gene 172 protein (mug172) from Schizosaccharomyces pombe (strain 972 / ATCC 24843) (Fission yeast).